The chain runs to 45 residues: Large ribosomal subunit protein bL34 (45 aa).

Belongs to the bacterial ribosomal protein bL34 family.

The polypeptide is Large ribosomal subunit protein bL34 (Beutenbergia cavernae (strain ATCC BAA-8 / DSM 12333 / CCUG 43141 / JCM 11478 / NBRC 16432 / NCIMB 13614 / HKI 0122)).